The following is a 64-amino-acid chain: Alternative prion protein (64 aa).

The tract at residues 1–22 is disordered; sequence MEHWGEPIPGTGQSWRQPLSTS. The span at 11–22 shows a compositional bias: polar residues; that stretch reads TGQSWRQPLSTS. The helical transmembrane segment at 40–58 threads the bilayer; the sequence is WRWLGSAPWWWLGTATWWW.

The protein resides in the mitochondrion outer membrane. In Ovis aries (Sheep), this protein is Alternative prion protein.